The chain runs to 174 residues: ATP synthase subunit delta, sodium ion specific (174 aa).

This sequence belongs to the ATPase delta chain family. In terms of assembly, F-type ATPases have 2 components, F(1) - the catalytic core - and F(0) - the membrane proton channel. F(1) has five subunits: alpha(3), beta(3), gamma(1), delta(1), epsilon(1). F(0) has three main subunits: a(1), b(2) and c(10-14). The alpha and beta chains form an alternating ring which encloses part of the gamma chain. F(1) is attached to F(0) by a central stalk formed by the gamma and epsilon chains, while a peripheral stalk is formed by the delta and b chains.

Its subcellular location is the cell inner membrane. F(1)F(0) ATP synthase produces ATP from ADP in the presence of a proton or sodium gradient. F-type ATPases consist of two structural domains, F(1) containing the extramembraneous catalytic core and F(0) containing the membrane proton channel, linked together by a central stalk and a peripheral stalk. During catalysis, ATP synthesis in the catalytic domain of F(1) is coupled via a rotary mechanism of the central stalk subunits to proton translocation. Functionally, this protein is part of the stalk that links CF(0) to CF(1). It either transmits conformational changes from CF(0) to CF(1) or is implicated in proton conduction. The protein is ATP synthase subunit delta, sodium ion specific of Propionigenium modestum.